A 402-amino-acid polypeptide reads, in one-letter code: Protein FixF (402 aa).

The sequence is that of Protein FixF (fixF) from Sinorhizobium fredii (strain NBRC 101917 / NGR234).